We begin with the raw amino-acid sequence, 341 residues long: Protein pelota homolog (341 aa).

This sequence belongs to the eukaryotic release factor 1 family. Pelota subfamily. As to quaternary structure, monomer. Requires a divalent metal cation as cofactor.

The protein resides in the cytoplasm. Functionally, may function in recognizing stalled ribosomes, interact with stem-loop structures in stalled mRNA molecules, and effect endonucleolytic cleavage of the mRNA. May play a role in the release non-functional ribosomes and degradation of damaged mRNAs. Has endoribonuclease activity. This chain is Protein pelota homolog, found in Metallosphaera sedula (strain ATCC 51363 / DSM 5348 / JCM 9185 / NBRC 15509 / TH2).